Reading from the N-terminus, the 243-residue chain is 3,4-dihydroxyphthalate decarboxylase (243 aa).

The active-site Proton donor/acceptor is the Glu86. Residues Glu86, His105, His107, and His173 each coordinate a divalent metal cation.

It belongs to the aldolase class II family. It depends on a divalent metal cation as a cofactor.

The catalysed reaction is 3,4-dihydroxyphthalate + H(+) = 3,4-dihydroxybenzoate + CO2. It functions in the pathway xenobiotic degradation; phthalate degradation. Catalyzes the decarboxylation of 3,4-dihydroxyphthalate to protocatechuate (3,4-dihydroxybenzoate) during phthalate metabolism. This chain is 3,4-dihydroxyphthalate decarboxylase, found in Rhodococcus jostii (strain RHA1).